Here is a 532-residue protein sequence, read N- to C-terminus: uncharacterized protein (532 aa).

The next 14 helical transmembrane spans lie at isoleucine 25 to glycine 45, serine 65 to threonine 85, alanine 109 to alanine 129, leucine 134 to serine 154, lysine 179 to leucine 199, isoleucine 203 to glutamate 223, leucine 248 to glutamate 268, valine 302 to threonine 322, lysine 344 to serine 364, serine 371 to isoleucine 391, alanine 392 to glycine 412, alanine 425 to arginine 445, serine 459 to glycine 479, and alanine 494 to valine 514.

It belongs to the polysaccharide synthase family.

Its subcellular location is the cell membrane. This is an uncharacterized protein from Bacillus subtilis (strain 168).